A 298-amino-acid polypeptide reads, in one-letter code: Diphthine methyl ester synthase (298 aa).

S-adenosyl-L-methionine-binding positions include Leu9, Asp85, Gly88, 113–114 (SV), Leu164, Leu222, and His247.

The protein belongs to the diphthine synthase family.

The protein resides in the cytoplasm. The catalysed reaction is 2-[(3S)-amino-3-carboxypropyl]-L-histidyl-[translation elongation factor 2] + 4 S-adenosyl-L-methionine = diphthine methyl ester-[translation elongation factor 2] + 4 S-adenosyl-L-homocysteine + 3 H(+). It participates in protein modification; peptidyl-diphthamide biosynthesis. Functionally, S-adenosyl-L-methionine-dependent methyltransferase that catalyzes four methylations of the modified target histidine residue in translation elongation factor 2 (EF-2), to form an intermediate called diphthine methyl ester. The four successive methylation reactions represent the second step of diphthamide biosynthesis. In Candida glabrata (strain ATCC 2001 / BCRC 20586 / JCM 3761 / NBRC 0622 / NRRL Y-65 / CBS 138) (Yeast), this protein is Diphthine methyl ester synthase (DPH5).